We begin with the raw amino-acid sequence, 165 residues long: V-type proton ATPase 16 kDa proteolipid subunit (165 aa).

Residues M1 to T10 are Lumenal-facing. The chain crosses the membrane as a helical span at residues A11 to G33. The Cytoplasmic segment spans residues T34–S55. Residues I56–I76 traverse the membrane as a helical segment. The Lumenal portion of the chain corresponds to S77–H95. Residues L96–G117 form a helical membrane-spanning segment. Topologically, residues D118–K129 are cytoplasmic. A helical transmembrane segment spans residues L130 to L155. The Lumenal portion of the chain corresponds to S156 to D165.

This sequence belongs to the V-ATPase proteolipid subunit family. V-ATPase is a heteromultimeric enzyme composed of a peripheral catalytic V1 complex (main components: subunits A, B, C, D, E, and F) attached to an integral membrane V0 proton pore complex (main component: the proteolipid protein; which is present as a hexamer that forms the proton-conducting pore). In terms of tissue distribution, higher expression in leaves, followed by roots and weakly in flowers. Expression in leaves is light-dependent.

Its subcellular location is the vacuole membrane. Proton-conducting pore forming subunit of the membrane integral V0 complex of vacuolar ATPase. V-ATPase is responsible for acidifying a variety of intracellular compartments in eukaryotic cells. Necessary for the crassulacean acid metabolism. This is V-type proton ATPase 16 kDa proteolipid subunit from Kalanchoe daigremontiana (Devil's backbone).